Reading from the N-terminus, the 258-residue chain is Ribosomal RNA small subunit methyltransferase J (258 aa).

Residues 123-124 and D177 each bind S-adenosyl-L-methionine; that span reads ER. The segment at 232–258 is disordered; sequence IDGPKPSHSLEGKSSRYDIYPKKALKA. The segment covering 239-252 has biased composition (basic and acidic residues); sequence HSLEGKSSRYDIYP.

It belongs to the methyltransferase superfamily. RsmJ family.

The protein resides in the cytoplasm. The enzyme catalyses guanosine(1516) in 16S rRNA + S-adenosyl-L-methionine = N(2)-methylguanosine(1516) in 16S rRNA + S-adenosyl-L-homocysteine + H(+). Functionally, specifically methylates the guanosine in position 1516 of 16S rRNA. This is Ribosomal RNA small subunit methyltransferase J from Pseudomonas putida (strain ATCC 47054 / DSM 6125 / CFBP 8728 / NCIMB 11950 / KT2440).